The following is a 309-amino-acid chain: uncharacterized protein (309 aa).

Solcar repeat units follow at residues 6-83 (SDLY…LCHS), 97-211 (LTGY…FKRL), and 216-302 (NDKA…VSLL). The next 6 helical transmembrane spans lie at 12–32 (ITAGSVAAVFQTTMTYPFEYL), 47–67 (IILPQIKSYFVGCSALNVAAF), 100–120 (YNLLIAGTLTGIVESLFIIPF), 184–204 (VQGTTATIFRQIANTSIQFTA), 222–242 (VITGLATSFTLVAMTQPIDVV), and 285–305 (VGISGGLTFTVYEQVSLLLGF).

Belongs to the mitochondrial carrier (TC 2.A.29) family.

Its subcellular location is the mitochondrion inner membrane. This is an uncharacterized protein from Saccharomyces cerevisiae (strain ATCC 204508 / S288c) (Baker's yeast).